Here is a 994-residue protein sequence, read N- to C-terminus: NACHT, LRR and PYD domains-containing protein 4 (994 aa).

One can recognise a Pyrin domain in the interval 1-94; sequence MAASFFSDFG…CMKVMRERTG (94 aa). One can recognise an NACHT domain in the interval 149–472; sequence RTVIIQGPQG…FYLLKSHLDH (324 aa). 155–162 is a binding site for ATP; that stretch reads GPQGIGKT. LRR repeat units lie at residues 637-660, 698-721, 722-745, 750-777, 806-833, 863-886, 920-943, and 949-972; these read SGHLRELQVQDSTLSESTFVTWCN, YLSFTLTKLSRDDIRSLCDALNYP, AGNVKELALVNCHLSPIDCEVLAG, NKKLTYLNVSCNQLDTGVPLLCEALCSP, NKSVRYLDLSANVLKDEGLKTLCEALKH, NQNLKILQIGCNEIGDVGVQLLCR, SKTLQQLNLTLNTLDHTGVVVLCE, and ECALQVLGLRKTDFDEETQALLTA.

The protein belongs to the NLRP family. In terms of assembly, interacts with CHUK/IKKA, inhibiting its kinase activity.

In terms of biological role, may be involved in inflammation and recognition of cytosolic pathogen-associated molecular patterns (PAMPs) not intercepted by membrane-bound receptors. Acts as a negative regulator of the type I interferon signaling pathway by serving as an adapter to promote DTX4-mediated ubiquitination of activated TBK1, and its subsequent degradation. Suppresses NF-kappaB induction by the cytokines TNFA and IL1B, suggesting that it operates at a point of convergence in these two cytokine signaling pathways. The sequence is that of NACHT, LRR and PYD domains-containing protein 4 from Homo sapiens (Human).